Here is a 145-residue protein sequence, read N- to C-terminus: MRTTPMANASTIERKWLVVDAAGKTLGRLSTEVASLLRGKHKPTYTPHVDTGDHVIIINAEKIELTGKKLTDKIYYRHTMHPGGLKQRTALEMRTNYPEKMLELAIKGMLPKGPLGRQMFKKLNVYRGSEHPHQAQQPEVYELRG.

This sequence belongs to the universal ribosomal protein uL13 family. In terms of assembly, part of the 50S ribosomal subunit.

In terms of biological role, this protein is one of the early assembly proteins of the 50S ribosomal subunit, although it is not seen to bind rRNA by itself. It is important during the early stages of 50S assembly. This is Large ribosomal subunit protein uL13 from Bacillus pumilus (strain SAFR-032).